Here is a 444-residue protein sequence, read N- to C-terminus: Cell wall mannoprotein PST1 (444 aa).

The N-terminal stretch at 1-19 (MQLHSLIASTALLITSALA) is a signal peptide. Residues Asn57, Asn76, Asn83, Asn86, Asn196, Asn210, Asn228, Asn235, Asn242, Asn263, Asn268, Asn280, Asn292, Asn305, and Asn329 are each glycosylated (N-linked (GlcNAc...) asparagine). Low complexity-rich tracts occupy residues 359–381 (SVKLSSTSKSQSSQTTAKVSKSS) and 395–417 (KAAASASSVSSSSASSSSSKSSK). Positions 359–418 (SVKLSSTSKSQSSQTTAKVSKSSSKAEEKKFTSGDIKAAASASSVSSSSASSSSSKSSKG) are disordered. The GPI-anchor amidated asparagine moiety is linked to residue Asn419. Residues 420–444 (AAIMAPIGQTTPLVGLLTAIIMSIM) constitute a propeptide, removed in mature form.

It belongs to the SPS2 family. Post-translationally, extensively N- and O-mannosylated.

The protein localises to the cell membrane. It localises to the secreted. It is found in the cell wall. Has a partially redundant function to ECM33 in cell wall integrity. May be involved in a repair mechanism activated in response to cell wall damage. The sequence is that of Cell wall mannoprotein PST1 (PST1) from Saccharomyces cerevisiae (strain YJM789) (Baker's yeast).